Consider the following 416-residue polypeptide: MIFDKEDYKAFDPELWNAIDAEAERQQNNIELIASENVVSKAVMAAQGTLLTNKYAEGYPGKRYYGGTAVIDVVETLAIERAKKLFGAKFANVQPHSGSQANAAVYMSLIQPGDTVMGMDLSAGGHLTHGAPVSFSGKTYNFVSYNVDKESELLDYDAILAQAKEVRPKLIVAGASAYSRIIDFAKFREIADAVGAYLMVDMAHIAGLVASGHHPSPVPYAHVTTTTTHKTLRGPRGGLILTDDEDIAKKLNSAVFPGLQGGPLEHVIAAKAVALKEALDPAFKEYGENVIKNAAAMADVFNQHPDFRVISGGTNNHLFLVDVTKVVENGKVAQNVLEEVNITLNKNSIPYEQLSPFKTSGIRVGSPAITSRGMGEAESRQIAEWMVEALENHDKPEVLERIRGDVKVLTDAFPLY.

(6S)-5,6,7,8-tetrahydrofolate is bound by residues Leu121 and 125-127 (GHL). An N6-(pyridoxal phosphate)lysine modification is found at Lys230. Position 355-357 (355-357 (SPF)) interacts with (6S)-5,6,7,8-tetrahydrofolate.

The protein belongs to the SHMT family. In terms of assembly, homodimer. It depends on pyridoxal 5'-phosphate as a cofactor.

Its subcellular location is the cytoplasm. The enzyme catalyses (6R)-5,10-methylene-5,6,7,8-tetrahydrofolate + glycine + H2O = (6S)-5,6,7,8-tetrahydrofolate + L-serine. Its pathway is one-carbon metabolism; tetrahydrofolate interconversion. The protein operates within amino-acid biosynthesis; glycine biosynthesis; glycine from L-serine: step 1/1. In terms of biological role, catalyzes the reversible interconversion of serine and glycine with tetrahydrofolate (THF) serving as the one-carbon carrier. This reaction serves as the major source of one-carbon groups required for the biosynthesis of purines, thymidylate, methionine, and other important biomolecules. Also exhibits THF-independent aldolase activity toward beta-hydroxyamino acids, producing glycine and aldehydes, via a retro-aldol mechanism. The protein is Serine hydroxymethyltransferase of Streptococcus thermophilus (strain CNRZ 1066).